Reading from the N-terminus, the 209-residue chain is Large ribosomal subunit protein uL3 (209 aa).

Residues F128–T156 form a disordered region.

It belongs to the universal ribosomal protein uL3 family. As to quaternary structure, part of the 50S ribosomal subunit. Forms a cluster with proteins L14 and L19.

In terms of biological role, one of the primary rRNA binding proteins, it binds directly near the 3'-end of the 23S rRNA, where it nucleates assembly of the 50S subunit. The polypeptide is Large ribosomal subunit protein uL3 (Prosthecochloris aestuarii (strain DSM 271 / SK 413)).